Reading from the N-terminus, the 742-residue chain is Ferric enterobactin receptor PirA (742 aa).

The first 28 residues, 1–28, serve as a signal peptide directing secretion; it reads MYPQFRRGHLAAAVLFASSSLLGGQALA. One can recognise a TBDR plug domain in the interval 57–184; that stretch reads QELKQAPGVS…AGGVVNIITK (128 aa). 2 disordered regions span residues 91–112 and 409–435; these read GVNL…IDIR and SSLK…PKSK. Polar residues predominate over residues 94-108; the sequence is LTGNSSSGQRGNNRQ. Residues 189–742 enclose the TBDR beta-barrel domain; that stretch reads RLRGSMTVFT…AYYVSMTTSF (554 aa). C516 and C525 are joined by a disulfide. Residues 725–742 carry the TonB C-terminal box motif; it reads ATYNEPGRAYYVSMTTSF.

It belongs to the TonB-dependent receptor family.

The protein localises to the cell outer membrane. Specific receptor for the siderophore ferric enterobactin. Probably involved in the transport of siderophores, including host catecholamines such as L-DOPA. The sequence is that of Ferric enterobactin receptor PirA from Pseudomonas aeruginosa (strain ATCC 15692 / DSM 22644 / CIP 104116 / JCM 14847 / LMG 12228 / 1C / PRS 101 / PAO1).